Consider the following 355-residue polypeptide: (3aS,4S,5R,7aS)-5-hydroxy-7a-methyl-1-oxo-octahydro-1H-indene-4-carboxyl-CoA dehydrogenase (355 aa).

FMN contacts are provided by residues 21-23 (GMG), 173-175 (AGG), and 196-197 (GT).

It belongs to the nitronate monooxygenase family.

It carries out the reaction (3aS,4S,5R,7aS)-5-hydroxy-7a-methyl-1-oxo-octahydro-1H-indene-4-carboxyl-CoA + NAD(+) = (5R,7aS)-5-hydroxy-7a-methyl-1-oxo-2,3,5,6,7,7a-hexahydro-1H-indene-carboxyl-CoA + NADH + H(+). The protein operates within steroid metabolism; cholesterol degradation. Requires the presence of IpdF. Involved in the final steps of cholesterol and steroid degradation. Probably catalyzes the introduction of a double bound into the C ring of 5OH-HIC-CoA, leading to the formation of (5R,7aS)-5-hydroxy-7a-methyl-1-oxo-3,5,6,7-tetrahydro-2H-indene-4-carboxyl-CoA. This chain is (3aS,4S,5R,7aS)-5-hydroxy-7a-methyl-1-oxo-octahydro-1H-indene-4-carboxyl-CoA dehydrogenase, found in Mycobacterium tuberculosis (strain ATCC 25618 / H37Rv).